The following is a 286-amino-acid chain: AB hydrolase superfamily protein YfhM (286 aa).

The AB hydrolase-1 domain maps to 27-272 (PLIVLLHGFP…ASHWINHEKP (246 aa)). Asp-103 (nucleophile) is an active-site residue. The active-site Proton donor is Tyr-210. His-265 acts as the Proton acceptor in catalysis.

It belongs to the AB hydrolase superfamily. Epoxide hydrolase family.

In Bacillus subtilis (strain 168), this protein is AB hydrolase superfamily protein YfhM (yfhM).